The primary structure comprises 107 residues: Replication initiation control protein YabA (107 aa).

Positions 81, 83, 97, and 100 each coordinate Zn(2+).

This sequence belongs to the YabA family. As to quaternary structure, homotetramer. Interacts with both DnaA and DnaN, acting as a bridge between these two proteins. Requires Zn(2+) as cofactor.

Its subcellular location is the cytoplasm. It is found in the nucleoid. Functionally, involved in control of chromosome replication initiation. Inhibits the cooperative binding of DnaA to the oriC region, thus negatively regulating initiation of chromosome replication. Inhibits the ability of DnaA-ATP to form a helix on DNA; does not disassemble preformed DnaA-DNA helices. Decreases the residence time of DnaA on the chromosome at its binding sites (oriC, replication forks and promoter-binding sites). Tethers DnaA to the replication machinery via the DNA polymerase beta sliding clamp subunit (dnaN). Associates with oriC and other DnaA targets on the chromosome in a DnaA-dependent manner. This is Replication initiation control protein YabA from Streptococcus pyogenes serotype M18 (strain MGAS8232).